Consider the following 273-residue polypeptide: Probable ribosomal RNA small subunit methyltransferase A (273 aa).

S-adenosyl-L-methionine is bound by residues asparagine 23, leucine 25, glycine 50, glutamate 71, aspartate 95, and asparagine 110.

Belongs to the class I-like SAM-binding methyltransferase superfamily. rRNA adenine N(6)-methyltransferase family. RsmA subfamily.

Its subcellular location is the cytoplasm. In terms of biological role, specifically dimethylates two adjacent adenosines in the loop of a conserved hairpin near the 3'-end of 16S rRNA in the 30S particle. May play a critical role in biogenesis of 30S subunits. The protein is Probable ribosomal RNA small subunit methyltransferase A of Pyrococcus furiosus (strain ATCC 43587 / DSM 3638 / JCM 8422 / Vc1).